A 636-amino-acid polypeptide reads, in one-letter code: Fructose-1,6-bisphosphatase class 3 (636 aa).

The protein belongs to the FBPase class 3 family. Mn(2+) is required as a cofactor.

The catalysed reaction is beta-D-fructose 1,6-bisphosphate + H2O = beta-D-fructose 6-phosphate + phosphate. It functions in the pathway carbohydrate biosynthesis; gluconeogenesis. The protein is Fructose-1,6-bisphosphatase class 3 of Streptococcus sanguinis (strain SK36).